A 102-amino-acid chain; its full sequence is Putative ribosomal protein uL13-like (102 aa).

This sequence belongs to the universal ribosomal protein uL13 family.

This chain is Putative ribosomal protein uL13-like (RPL13AP3), found in Homo sapiens (Human).